The following is a 1436-amino-acid chain: Gag-Pol polyprotein (1436 aa).

The N-myristoyl glycine; by host moiety is linked to residue G2. An interaction with Gp41 region spans residues V7–L31. An interaction with host CALM1 region spans residues L8–R43. Positions K12–I19 are interaction with host AP3D1. An interaction with membrane phosphatidylinositol 4,5-bisphosphate and RNA region spans residues D14–H33. Residues W16–R22 carry the Nuclear export signal motif. Residues K26–K32 carry the Nuclear localization signal motif. The interval E73 to S77 is interaction with membrane phosphatidylinositol 4,5-bisphosphate. The tract at residues E106 to V128 is disordered. At Y132 the chain carries Phosphotyrosine; by host. The interaction with human PPIA/CYPA and NUP153 stretch occupies residues N189–Q227. The interval Y277–L363 is dimerization/Multimerization of capsid protein p24. CCHC-type zinc fingers lie at residues V390 to A407 and K411 to N428. A disordered region spans residues K446–L465. Positions P490 to L494 are dimerization of protease. The Peptidase A2 domain occupies K509–L578. D514 serves as the catalytic For protease activity; shared with dimeric partner. 2 dimerization of protease regions span residues G538–K544 and N577–P589. The region spanning E632 to L822 is the Reverse transcriptase domain. Mg(2+)-binding residues include D698, D773, and D774. The RT 'primer grip' stretch occupies residues F815–H823. The Tryptophan repeat motif signature appears at W986–W1002. The region spanning I1022–R1145 is the RNase H type-1 domain. Residues D1031, E1066, D1086, and D1137 each coordinate Mg(2+). Residues D1151–Q1192 form an Integrase-type zinc finger. H1160, H1164, C1188, and C1191 together coordinate Zn(2+). Residues V1202–I1352 form the Integrase catalytic domain. 3 residues coordinate Mg(2+): D1212, D1264, and E1300. Positions F1371 to D1418 form a DNA-binding region, integrase-type.

Homotrimer; further assembles as hexamers of trimers. Interacts with gp41 (via C-terminus). Interacts with host CALM1; this interaction induces a conformational change in the Matrix protein, triggering exposure of the myristate group. Interacts with host AP3D1; this interaction allows the polyprotein trafficking to multivesicular bodies during virus assembly. Part of the pre-integration complex (PIC) which is composed of viral genome, matrix protein, Vpr and integrase. As to quaternary structure, homodimer; the homodimer further multimerizes as homohexamers or homopentamers. Interacts with human PPIA/CYPA; This interaction stabilizes the capsid. Interacts with human NUP153. Interacts with host PDZD8; this interaction stabilizes the capsid. Interacts with monkey TRIM5; this interaction destabilizes the capsid. In terms of assembly, homodimer, whose active site consists of two apposed aspartic acid residues. Heterodimer of p66 RT and p51 RT (RT p66/p51). Heterodimerization of RT is essential for DNA polymerase activity. The overall folding of the subdomains is similar in p66 RT and p51 RT but the spatial arrangements of the subdomains are dramatically different. As to quaternary structure, homotetramer; may further associate as a homohexadecamer. Part of the pre-integration complex (PIC) which is composed of viral genome, matrix protein, Vpr and integrase. Interacts with human SMARCB1/INI1 and human PSIP1/LEDGF isoform 1. Interacts with human KPNA3; this interaction might play a role in nuclear import of the pre-integration complex. Interacts with human NUP153; this interaction might play a role in nuclear import of the pre-integration complex. Mg(2+) is required as a cofactor. Post-translationally, specific enzymatic cleavages by the viral protease yield mature proteins. The protease is released by autocatalytic cleavage. The polyprotein is cleaved during and after budding, this process is termed maturation. Proteolytic cleavage of p66 RT removes the RNase H domain to yield the p51 RT subunit. Nucleocapsid protein p7 might be further cleaved after virus entry. In terms of processing, tyrosine phosphorylated presumably in the virion by a host kinase. Phosphorylation is apparently not a major regulator of membrane association. Phosphorylated possibly by host MAPK1; this phosphorylation is necessary for Pin1-mediated virion uncoating. Post-translationally, methylated by host PRMT6, impairing its function by reducing RNA annealing and the initiation of reverse transcription.

The protein localises to the host cell membrane. It is found in the host endosome. It localises to the host multivesicular body. Its subcellular location is the virion membrane. The protein resides in the host nucleus. The protein localises to the host cytoplasm. It is found in the virion. It carries out the reaction Specific for a P1 residue that is hydrophobic, and P1' variable, but often Pro.. The catalysed reaction is Endohydrolysis of RNA in RNA/DNA hybrids. Three different cleavage modes: 1. sequence-specific internal cleavage of RNA. Human immunodeficiency virus type 1 and Moloney murine leukemia virus enzymes prefer to cleave the RNA strand one nucleotide away from the RNA-DNA junction. 2. RNA 5'-end directed cleavage 13-19 nucleotides from the RNA end. 3. DNA 3'-end directed cleavage 15-20 nucleotides away from the primer terminus.. The enzyme catalyses 3'-end directed exonucleolytic cleavage of viral RNA-DNA hybrid.. It catalyses the reaction DNA(n) + a 2'-deoxyribonucleoside 5'-triphosphate = DNA(n+1) + diphosphate. With respect to regulation, protease: The viral protease is inhibited by many synthetic protease inhibitors (PIs), such as amprenavir, atazanavir, indinavir, loprinavir, nelfinavir, ritonavir and saquinavir. Use of protease inhibitors in tritherapy regimens permit more ambitious therapeutic strategies. Reverse transcriptase/ribonuclease H: RT can be inhibited either by nucleoside RT inhibitors (NRTIs) or by non nucleoside RT inhibitors (NNRTIs). NRTIs act as chain terminators, whereas NNRTIs inhibit DNA polymerization by binding a small hydrophobic pocket near the RT active site and inducing an allosteric change in this region. Classical NRTIs are abacavir, adefovir (PMEA), didanosine (ddI), lamivudine (3TC), stavudine (d4T), tenofovir (PMPA), zalcitabine (ddC), and zidovudine (AZT). Classical NNRTIs are atevirdine (BHAP U-87201E), delavirdine, efavirenz (DMP-266), emivirine (I-EBU), and nevirapine (BI-RG-587). The tritherapies used as a basic effective treatment of AIDS associate two NRTIs and one NNRTI. Functionally, mediates, with Gag polyprotein, the essential events in virion assembly, including binding the plasma membrane, making the protein-protein interactions necessary to create spherical particles, recruiting the viral Env proteins, and packaging the genomic RNA via direct interactions with the RNA packaging sequence (Psi). Gag-Pol polyprotein may regulate its own translation, by the binding genomic RNA in the 5'-UTR. At low concentration, the polyprotein would promote translation, whereas at high concentration, the polyprotein would encapsidate genomic RNA and then shut off translation. In terms of biological role, targets the polyprotein to the plasma membrane via a multipartite membrane-binding signal, that includes its myristoylated N-terminus. Matrix protein is part of the pre-integration complex. Implicated in the release from host cell mediated by Vpu. Binds to RNA. Its function is as follows. Forms the conical core that encapsulates the genomic RNA-nucleocapsid complex in the virion. Most core are conical, with only 7% tubular. The core is constituted by capsid protein hexamer subunits. The core is disassembled soon after virion entry. Host restriction factors such as TRIM5-alpha or TRIMCyp bind retroviral capsids and cause premature capsid disassembly, leading to blocks in reverse transcription. Capsid restriction by TRIM5 is one of the factors which restricts HIV-1 to the human species. Host PIN1 apparently facilitates the virion uncoating. On the other hand, interactions with PDZD8 or CYPA stabilize the capsid. Encapsulates and protects viral dimeric unspliced genomic RNA (gRNA). Binds these RNAs through its zinc fingers. Acts as a nucleic acid chaperone which is involved in rearangement of nucleic acid secondary structure during gRNA retrotranscription. Also facilitates template switch leading to recombination. As part of the polyprotein, participates in gRNA dimerization, packaging, tRNA incorporation and virion assembly. Functionally, aspartyl protease that mediates proteolytic cleavages of Gag and Gag-Pol polyproteins during or shortly after the release of the virion from the plasma membrane. Cleavages take place as an ordered, step-wise cascade to yield mature proteins. This process is called maturation. Displays maximal activity during the budding process just prior to particle release from the cell. Also cleaves Nef and Vif, probably concomitantly with viral structural proteins on maturation of virus particles. Hydrolyzes host EIF4GI and PABP1 in order to shut off the capped cellular mRNA translation. The resulting inhibition of cellular protein synthesis serves to ensure maximal viral gene expression and to evade host immune response. Also mediates cleavage of host YTHDF3. Mediates cleavage of host CARD8, thereby activating the CARD8 inflammasome, leading to the clearance of latent HIV-1 in patient CD4(+) T-cells after viral reactivation; in contrast, HIV-1 can evade CARD8-sensing when its protease remains inactive in infected cells prior to viral budding. In terms of biological role, multifunctional enzyme that converts the viral RNA genome into dsDNA in the cytoplasm, shortly after virus entry into the cell. This enzyme displays a DNA polymerase activity that can copy either DNA or RNA templates, and a ribonuclease H (RNase H) activity that cleaves the RNA strand of RNA-DNA heteroduplexes in a partially processive 3' to 5' endonucleasic mode. Conversion of viral genomic RNA into dsDNA requires many steps. A tRNA(3)-Lys binds to the primer-binding site (PBS) situated at the 5'-end of the viral RNA. RT uses the 3' end of the tRNA primer to perform a short round of RNA-dependent minus-strand DNA synthesis. The reading proceeds through the U5 region and ends after the repeated (R) region which is present at both ends of viral RNA. The portion of the RNA-DNA heteroduplex is digested by the RNase H, resulting in a ssDNA product attached to the tRNA primer. This ssDNA/tRNA hybridizes with the identical R region situated at the 3' end of viral RNA. This template exchange, known as minus-strand DNA strong stop transfer, can be either intra- or intermolecular. RT uses the 3' end of this newly synthesized short ssDNA to perform the RNA-dependent minus-strand DNA synthesis of the whole template. RNase H digests the RNA template except for two polypurine tracts (PPTs) situated at the 5'-end and near the center of the genome. It is not clear if both polymerase and RNase H activities are simultaneous. RNase H probably can proceed both in a polymerase-dependent (RNA cut into small fragments by the same RT performing DNA synthesis) and a polymerase-independent mode (cleavage of remaining RNA fragments by free RTs). Secondly, RT performs DNA-directed plus-strand DNA synthesis using the PPTs that have not been removed by RNase H as primers. PPTs and tRNA primers are then removed by RNase H. The 3' and 5' ssDNA PBS regions hybridize to form a circular dsDNA intermediate. Strand displacement synthesis by RT to the PBS and PPT ends produces a blunt ended, linear dsDNA copy of the viral genome that includes long terminal repeats (LTRs) at both ends. Its function is as follows. Catalyzes viral DNA integration into the host chromosome, by performing a series of DNA cutting and joining reactions. This enzyme activity takes place after virion entry into a cell and reverse transcription of the RNA genome in dsDNA. The first step in the integration process is 3' processing. This step requires a complex comprising the viral genome, matrix protein, Vpr and integrase. This complex is called the pre-integration complex (PIC). The integrase protein removes 2 nucleotides from each 3' end of the viral DNA, leaving recessed CA OH's at the 3' ends. In the second step, the PIC enters cell nucleus. This process is mediated through integrase and Vpr proteins, and allows the virus to infect a non dividing cell. This ability to enter the nucleus is specific of lentiviruses, other retroviruses cannot and rely on cell division to access cell chromosomes. In the third step, termed strand transfer, the integrase protein joins the previously processed 3' ends to the 5' ends of strands of target cellular DNA at the site of integration. The 5'-ends are produced by integrase-catalyzed staggered cuts, 5 bp apart. A Y-shaped, gapped, recombination intermediate results, with the 5'-ends of the viral DNA strands and the 3' ends of target DNA strands remaining unjoined, flanking a gap of 5 bp. The last step is viral DNA integration into host chromosome. This involves host DNA repair synthesis in which the 5 bp gaps between the unjoined strands are filled in and then ligated. Since this process occurs at both cuts flanking the HIV genome, a 5 bp duplication of host DNA is produced at the ends of HIV-1 integration. Alternatively, Integrase may catalyze the excision of viral DNA just after strand transfer, this is termed disintegration. In Human immunodeficiency virus type 1 group M subtype B (isolate RF/HAT3) (HIV-1), this protein is Gag-Pol polyprotein (gag-pol).